Here is a 374-residue protein sequence, read N- to C-terminus: PqqA peptide cyclase (374 aa).

The Radical SAM core domain occupies 7–222; it reads VTPPLWLLAE…VADYRQRMGA (216 aa). [4Fe-4S] cluster-binding residues include C21, C25, and C28.

The protein belongs to the radical SAM superfamily. PqqE family. Interacts with PqqD. The interaction is necessary for activity of PqqE. Requires [4Fe-4S] cluster as cofactor.

The enzyme catalyses [PQQ precursor protein] + S-adenosyl-L-methionine = E-Y cross-linked-[PQQ precursor protein] + 5'-deoxyadenosine + L-methionine + H(+). Its pathway is cofactor biosynthesis; pyrroloquinoline quinone biosynthesis. In terms of biological role, catalyzes the cross-linking of a glutamate residue and a tyrosine residue in the PqqA protein as part of the biosynthesis of pyrroloquinoline quinone (PQQ). In Kluyvera intermedia (Enterobacter intermedius), this protein is PqqA peptide cyclase.